A 304-amino-acid chain; its full sequence is Polyisoprenyl-teichoic acid--peptidoglycan teichoic acid transferase TagU (304 aa).

The Cytoplasmic segment spans residues M1 to K4. The chain crosses the membrane as a helical; Signal-anchor for type II membrane protein span at residues I5 to Y25. Topologically, residues S26–K304 are extracellular.

It belongs to the LytR/CpsA/Psr (LCP) family.

The protein localises to the cell membrane. It functions in the pathway cell wall biogenesis. In terms of biological role, may catalyze the final step in cell wall teichoic acid biosynthesis, the transfer of the anionic cell wall polymers (APs) from their lipid-linked precursor to the cell wall peptidoglycan (PG). The chain is Polyisoprenyl-teichoic acid--peptidoglycan teichoic acid transferase TagU from Bacillus cereus (strain ATCC 14579 / DSM 31 / CCUG 7414 / JCM 2152 / NBRC 15305 / NCIMB 9373 / NCTC 2599 / NRRL B-3711).